The sequence spans 1434 residues: DNA-directed RNA polymerase subunit beta (1434 aa).

The protein belongs to the RNA polymerase beta chain family. In terms of assembly, the RNAP catalytic core consists of 2 alpha, 1 beta, 1 beta' and 1 omega subunit. When a sigma factor is associated with the core the holoenzyme is formed, which can initiate transcription.

It carries out the reaction RNA(n) + a ribonucleoside 5'-triphosphate = RNA(n+1) + diphosphate. DNA-dependent RNA polymerase catalyzes the transcription of DNA into RNA using the four ribonucleoside triphosphates as substrates. The polypeptide is DNA-directed RNA polymerase subunit beta (Ureaplasma parvum serovar 3 (strain ATCC 700970)).